A 189-amino-acid polypeptide reads, in one-letter code: Peptidyl-tRNA hydrolase (189 aa).

Tyr15 is a tRNA binding site. His20 acts as the Proton acceptor in catalysis. Residues Phe66, Asn68, and Asn114 each contribute to the tRNA site.

Belongs to the PTH family. In terms of assembly, monomer.

The protein localises to the cytoplasm. It carries out the reaction an N-acyl-L-alpha-aminoacyl-tRNA + H2O = an N-acyl-L-amino acid + a tRNA + H(+). In terms of biological role, hydrolyzes ribosome-free peptidyl-tRNAs (with 1 or more amino acids incorporated), which drop off the ribosome during protein synthesis, or as a result of ribosome stalling. Functionally, catalyzes the release of premature peptidyl moieties from peptidyl-tRNA molecules trapped in stalled 50S ribosomal subunits, and thus maintains levels of free tRNAs and 50S ribosomes. The polypeptide is Peptidyl-tRNA hydrolase (Streptococcus pyogenes serotype M6 (strain ATCC BAA-946 / MGAS10394)).